Reading from the N-terminus, the 92-residue chain is uncharacterized protein (92 aa).

The protein to M.jannaschii MJ0782.1.

This is an uncharacterized protein from Methanothermobacter thermautotrophicus (strain ATCC 29096 / DSM 1053 / JCM 10044 / NBRC 100330 / Delta H) (Methanobacterium thermoautotrophicum).